The sequence spans 167 residues: MAIRRICELPEPVLRKKAKKVPSIDGSIQTLIDDMIETMNSADGAGLAAPQVGVSLRLVVFREPDTKEATVLINPEIIKKEGQRQVTEGCLSIPGYFGELTRAETVTAKGLDRHGKACRIKGTGIVAQLLEHETEHLDGILYIDHLESEDQLHEIGPDDEMPEEIRE.

Fe cation is bound by residues Cys90 and His132. Glu133 is an active-site residue. His136 is a binding site for Fe cation.

It belongs to the polypeptide deformylase family. Fe(2+) is required as a cofactor.

It catalyses the reaction N-terminal N-formyl-L-methionyl-[peptide] + H2O = N-terminal L-methionyl-[peptide] + formate. Its function is as follows. Removes the formyl group from the N-terminal Met of newly synthesized proteins. Requires at least a dipeptide for an efficient rate of reaction. N-terminal L-methionine is a prerequisite for activity but the enzyme has broad specificity at other positions. The protein is Peptide deformylase of Dehalococcoides mccartyi (strain ATCC BAA-2100 / JCM 16839 / KCTC 5957 / BAV1).